The following is a 309-amino-acid chain: Low density lipoprotein receptor adapter protein 1-A (309 aa).

The region spanning 41–195 (LLEGMLFHLK…SGGEGASSSQ (155 aa)) is the PID domain. Positions 179–199 (EKREKSGSGGEGASSSQSDGS) are disordered. A Clathrin box motif is present at residues 213–217 (LLDLE). Residues 250–277 (WELDDGLDEAFARLAESRTNPQVLDIGL) form an AP-2 complex binding region. Residues 258 to 267 (EAFARLAESR) carry the [DE]-X(1,2)-F-X-X-[FL]-X-X-X-R motif motif.

As to quaternary structure, interacts (via PID domain) with ldlr (via NPXY motif). Binds to soluble clathrin trimers and to the adapter protein complex 2 (AP-2, beta 2 subunit). Binds to phosphoinositides, which regulate clathrin bud assembly at the cell surface. Interacts with the VLDL receptor (vldlr). Interacts with the vitellogenin receptor. Expressed at high level during oogenesis and embryogenesis. Found in the oocyte vegetal cortex. Found at low level in the adult liver and spleen. Found at very low level in testis and heart.

It is found in the cytoplasm. Its function is as follows. Adapter protein (clathrin-associated sorting protein (CLASP)) required for efficient endocytosis of the LDL receptor (LDLR). Also involved in the vitellogenin receptor mediated endocytosis of nutrients during oogenesis. This chain is Low density lipoprotein receptor adapter protein 1-A, found in Xenopus laevis (African clawed frog).